Here is a 334-residue protein sequence, read N- to C-terminus: Phosphate acyltransferase (334 aa).

This sequence belongs to the PlsX family. Homodimer. Probably interacts with PlsY.

The protein resides in the cytoplasm. The catalysed reaction is a fatty acyl-[ACP] + phosphate = an acyl phosphate + holo-[ACP]. Its pathway is lipid metabolism; phospholipid metabolism. Catalyzes the reversible formation of acyl-phosphate (acyl-PO(4)) from acyl-[acyl-carrier-protein] (acyl-ACP). This enzyme utilizes acyl-ACP as fatty acyl donor, but not acyl-CoA. The polypeptide is Phosphate acyltransferase (Desulfitobacterium hafniense (strain DSM 10664 / DCB-2)).